A 383-amino-acid polypeptide reads, in one-letter code: MAKTIKHPRWGRYVAEAVGRGHPDKICDQIADSILDECIKQSPTSHVACEVFASKNLIMVGGEILTTGYVDVVQTGWKVLNRLGYTENDFSFLSCINSQSSEINQAVQSNDEIGAGDQGITVGYACSETEQLMPLGSIVAQALVQRAARIIDQYPFIKHDMKSQVVLNYTGNKVQCESVLMSVQHTQDVSLDQLRQTIINQVILPVLTEYGLNDPKIKHLVNPGGSFVVGGPMADTGLTGRKIIVDTYGPYANHGGGSFSGKDPTKVDRTGAYFARFIAKHIVSLGWAEECEVSISWVFSQPLPQSIQVKCFNINKEFSEQLINQVISQYFNWSVAKIIAKLKLLDQVEYFRYAVYGHFGHQTAPWEQLSERDSLQCLIKNFQ.

An ATP-binding site is contributed by histidine 22. Aspartate 24 serves as a coordination point for Mg(2+). Position 50 (glutamate 50) interacts with K(+). L-methionine-binding residues include glutamate 63 and glutamine 99. A flexible loop region spans residues 99 to 109 (QSSEINQAVQS). ATP is bound by residues 160–162 (DMK), aspartate 235, 241–242 (RK), serine 258, and lysine 262. Aspartate 235 contacts L-methionine. L-methionine is bound at residue lysine 266.

This sequence belongs to the AdoMet synthase family. In terms of assembly, homotetramer; dimer of dimers. Mg(2+) serves as cofactor. Requires K(+) as cofactor.

The protein localises to the cytoplasm. It carries out the reaction L-methionine + ATP + H2O = S-adenosyl-L-methionine + phosphate + diphosphate. It participates in amino-acid biosynthesis; S-adenosyl-L-methionine biosynthesis; S-adenosyl-L-methionine from L-methionine: step 1/1. Catalyzes the formation of S-adenosylmethionine (AdoMet) from methionine and ATP. The overall synthetic reaction is composed of two sequential steps, AdoMet formation and the subsequent tripolyphosphate hydrolysis which occurs prior to release of AdoMet from the enzyme. This is S-adenosylmethionine synthase from Mycoplasma pneumoniae (strain ATCC 29342 / M129 / Subtype 1) (Mycoplasmoides pneumoniae).